The primary structure comprises 100 residues: NADH-quinone oxidoreductase subunit K (100 aa).

3 helical membrane passes run 3–23 (LNAY…GIFL), 29–49 (ISIM…FVAF), and 60–80 (IFTF…LAIL).

Belongs to the complex I subunit 4L family. As to quaternary structure, NDH-1 is composed of 14 different subunits. Subunits NuoA, H, J, K, L, M, N constitute the membrane sector of the complex.

The protein resides in the cell inner membrane. The catalysed reaction is a quinone + NADH + 5 H(+)(in) = a quinol + NAD(+) + 4 H(+)(out). Functionally, NDH-1 shuttles electrons from NADH, via FMN and iron-sulfur (Fe-S) centers, to quinones in the respiratory chain. The immediate electron acceptor for the enzyme in this species is believed to be ubiquinone. Couples the redox reaction to proton translocation (for every two electrons transferred, four hydrogen ions are translocated across the cytoplasmic membrane), and thus conserves the redox energy in a proton gradient. The sequence is that of NADH-quinone oxidoreductase subunit K from Magnetococcus marinus (strain ATCC BAA-1437 / JCM 17883 / MC-1).